Reading from the N-terminus, the 894-residue chain is Alanine--tRNA ligase (894 aa).

This sequence belongs to the class-II aminoacyl-tRNA synthetase family.

The protein resides in the cytoplasm. The enzyme catalyses tRNA(Ala) + L-alanine + ATP = L-alanyl-tRNA(Ala) + AMP + diphosphate. Catalyzes the attachment of alanine to tRNA(Ala) in a two-step reaction: alanine is first activated by ATP to form Ala-AMP and then transferred to the acceptor end of tRNA(Ala). Also edits incorrectly charged Ser-tRNA(Ala) and Gly-tRNA(Ala) via its editing domain. The chain is Alanine--tRNA ligase (alaS) from Leuconostoc citreum (strain KM20).